We begin with the raw amino-acid sequence, 689 residues long: Long-chain-fatty-acid--CoA ligase 2 (689 aa).

252 to 263 is a binding site for ATP; it reads YTSGSTGKPKGV. The short motif at 518–567 is the FACS element; that stretch reads DGWFKTGDVGEIAKGNTLRLIDRKKNIVKSLNGEYIALEKIEAQFFTSPL.

It belongs to the ATP-dependent AMP-binding enzyme family. Mg(2+) is required as a cofactor.

The protein resides in the golgi apparatus. It localises to the vacuole membrane. The enzyme catalyses a long-chain fatty acid + ATP + CoA = a long-chain fatty acyl-CoA + AMP + diphosphate. Esterification, concomitant with transport, of endogenous long-chain fatty acids into metabolically active CoA thioesters for subsequent degradation or incorporation into phospholipids. Plays an important role in the determination of viability in the stationary phase. In Schizosaccharomyces pombe (strain 972 / ATCC 24843) (Fission yeast), this protein is Long-chain-fatty-acid--CoA ligase 2 (lcf2).